A 404-amino-acid chain; its full sequence is S-adenosylmethionine synthase (404 aa).

Position 18 (H18) interacts with ATP. D20 lines the Mg(2+) pocket. A K(+)-binding site is contributed by E46. Positions 59 and 102 each coordinate L-methionine. Residues 102–112 are flexible loop; it reads QSPEIAQGVDH. ATP-binding positions include 178 to 180, 249 to 250, D258, 264 to 265, A281, and K285; these read DGK, KF, and RK. Position 258 (D258) interacts with L-methionine. K289 serves as a coordination point for L-methionine.

This sequence belongs to the AdoMet synthase family. Homotetramer; dimer of dimers. It depends on Mg(2+) as a cofactor. The cofactor is K(+).

Its subcellular location is the cytoplasm. It carries out the reaction L-methionine + ATP + H2O = S-adenosyl-L-methionine + phosphate + diphosphate. It functions in the pathway amino-acid biosynthesis; S-adenosyl-L-methionine biosynthesis; S-adenosyl-L-methionine from L-methionine: step 1/1. In terms of biological role, catalyzes the formation of S-adenosylmethionine (AdoMet) from methionine and ATP. The overall synthetic reaction is composed of two sequential steps, AdoMet formation and the subsequent tripolyphosphate hydrolysis which occurs prior to release of AdoMet from the enzyme. This chain is S-adenosylmethionine synthase, found in Rhodococcus opacus (strain B4).